The sequence spans 368 residues: DNA replication and repair protein RecF (368 aa).

30–37 contributes to the ATP binding site; the sequence is GNNAQGKT.

This sequence belongs to the RecF family.

The protein resides in the cytoplasm. The RecF protein is involved in DNA metabolism; it is required for DNA replication and normal SOS inducibility. RecF binds preferentially to single-stranded, linear DNA. It also seems to bind ATP. The chain is DNA replication and repair protein RecF from Streptococcus pyogenes serotype M12 (strain MGAS2096).